Here is a 371-residue protein sequence, read N- to C-terminus: Protein RecA (371 aa).

Residue 75 to 82 (GPESSGKT) participates in ATP binding. The tract at residues 343 to 371 (KAKDEPIADEDQPIDVVPNFDDQDVEPQN) is disordered.

This sequence belongs to the RecA family.

The protein resides in the cytoplasm. Can catalyze the hydrolysis of ATP in the presence of single-stranded DNA, the ATP-dependent uptake of single-stranded DNA by duplex DNA, and the ATP-dependent hybridization of homologous single-stranded DNAs. It interacts with LexA causing its activation and leading to its autocatalytic cleavage. The sequence is that of Protein RecA from Corynebacterium urealyticum (strain ATCC 43042 / DSM 7109).